The chain runs to 726 residues: MPKEHKKRGRREEQKKRKRDHDHVDAAPKRLKKEDDVELESIENGEAFHHEPVDVTRPGELTYYGMLDDEEQEYFKRADEMLELNQFEDPEARNLFLASVYKEADGKELKIANSQSCSRLLERLILLSSPDQLKNLFQKFNGHFLNLVQHRFASHCCEALFIHAAPVVTLELAEPQTLQTPPSSDPNAIIVSMESLFLYTLAELEEHLGYLMTDRFASHVLRVLLVVLSGAPLAKENKNKSVLQSKRKEKVGIAGTERGQDWVLEKRPVPKSFLEALEKTINASASTLDTANLRLLATHPLGNPTLQLLLKLELAHFGKSRAKDENSIIHKMLPDDPIAEGTESAAFINGLVYDPIGSRLLETIIESAPGKLFKQIYSEFFKERMGSLSRNEIAGYVAGKILERLGKDDLDEAMRQIVEQIPNLVERNRTAIIKTLLERCIARNVDISLIKDQLEAVYSGPNGFEVTRILRVSESPAENLKQNGKQDHSPEKVHGSLLAQTMMAVDGPLGDLIFDSLAKLTPELSVQLARDPTASRTLQAALTAEHASVIFRRKMIQQFYGHVGELALDPAASRVIDAVWHGTHGLAFIRERIAEELAENENSLRESFVGRAVWRNWRMDLYKRKRGDWVKQSKYTAGNDGFQSFPESNGESSTTPPHRQSHAQNQRGGKHMSAIELARQKHAAKAVEAKKREAQTDKKMKREKKDKHVGVAESSKGKEKASVVAQ.

The segment at 1–52 is disordered; it reads MPKEHKKRGRREEQKKRKRDHDHVDAAPKRLKKEDDVELESIENGEAFHHEP. The span at 10 to 35 shows a compositional bias: basic and acidic residues; sequence RREEQKKRKRDHDHVDAAPKRLKKED. 7 Pumilio repeats span residues 103–138, 139–174, 203–244, 343–378, 379–419, 519–557, and 558–595; these read EADG…NLFQ, KFNG…ELAE, ELEE…SVLQ, ESAA…QIYS, EFFK…QIVE, KLTP…KMIQ, and QFYG…RIAE. Residues 640-667 show a composition bias toward polar residues; sequence DGFQSFPESNGESSTTPPHRQSHAQNQR. A disordered region spans residues 640 to 726; it reads DGFQSFPESN…GKEKASVVAQ (87 aa). Composition is skewed to basic and acidic residues over residues 685 to 700 and 706 to 726; these read KAVE…DKKM and DKHV…VVAQ.

It belongs to the NOP9 family.

Its subcellular location is the nucleus. The protein localises to the nucleolus. In terms of biological role, RNA-binding nucleolar protein required for pre-rRNA processing. Involved in production of 18S rRNA and assembly of small ribosomal subunit. The protein is Nucleolar protein 9 (NOP9) of Phaeosphaeria nodorum (strain SN15 / ATCC MYA-4574 / FGSC 10173) (Glume blotch fungus).